Here is a 772-residue protein sequence, read N- to C-terminus: Magnetosome formation protease MamE (772 aa).

Residues 1-21 (MTMFNGDVEDGGRSNVSCGKD) lie on the Cytoplasmic side of the membrane. The chain crosses the membrane as a helical span at residues 22-42 (LKRYLMLMGVVALVVLFGAFI). Over 43-772 (YRQSSGGLRL…RNGQEFWIVL (730 aa)) the chain is Lumenal. Catalysis depends on charge relay system residues H187, D220, and S296. Residues 374 to 397 (IAAGTPSPHVDGRQNMDCSNCHDI) carry the MCR (magnetochrome) 1 motif. C391, C394, H395, C437, C440, H441, C488, C491, and H492 together coordinate heme. 2 short sequence motifs (MCR) span residues 420–443 (IPANAVSPHTDGRQNMTCNTCHQF) and 470–494 (AIRANAANPHTDGRQNMNCASCHQI). The region spanning 445–558 (GGAAAGPIAF…ALTPLTQRLG (114 aa)) is the Cytochrome c domain. 2 PDZ domains span residues 522 to 626 (AINI…LRAG) and 696 to 765 (GATP…HRNG).

It in the N-terminal section; belongs to the peptidase S1C family. In terms of assembly, might interact with MamB via PDZ1. The cofactor is heme. In terms of processing, the protein isolated from magnetosome membranes has a molecular weight of about 36.3 kDa, probably due to C-terminal cleavage. Subject to autocatalytic cleavage; cleavage also requires MamO; these may be the same event.

It localises to the magnetosome membrane. Its function is as follows. Acts at 2 distinct steps of magnetosome formation; required for correct localization of proteins to the magnetosome while the protease activity is required for maturation of small magnetite crystals into larger, functional ones. Probably cleaves at least itself, MamO and MamP; cleavage requires the putative transprot domain of MamO. Involved in localization of some proteins (at least MamA, MamC, MamF, MamI and MamJ) to the magnetosome. One of 7 genes (mamLQBIEMO) able to induce magnetosome membrane biogenesis; coexpression of mamLQRBIEMO in a deletion of the 17 gene mamAB operon restores magnetosome vesicle formation but not magnetite biosynthesis. The protein is Magnetosome formation protease MamE of Magnetospirillum gryphiswaldense (strain DSM 6361 / JCM 21280 / NBRC 15271 / MSR-1).